The primary structure comprises 159 residues: Large ribosomal subunit protein bL35c (159 aa).

The N-terminal 86 residues, 1–86 (MAMASATATL…TSSPSFTVFA (86 aa)), are a transit peptide targeting the chloroplast.

As to quaternary structure, component of the chloroplast large ribosomal subunit (LSU). Mature 70S chloroplast ribosomes of higher plants consist of a small (30S) and a large (50S) subunit. The 30S small subunit contains 1 molecule of ribosomal RNA (16S rRNA) and 24 different proteins. The 50S large subunit contains 3 rRNA molecules (23S, 5S and 4.5S rRNA) and 33 different proteins.

The protein localises to the plastid. The protein resides in the chloroplast. Its function is as follows. Component of the chloroplast ribosome (chloro-ribosome), a dedicated translation machinery responsible for the synthesis of chloroplast genome-encoded proteins, including proteins of the transcription and translation machinery and components of the photosynthetic apparatus. The sequence is that of Large ribosomal subunit protein bL35c (RPL35) from Spinacia oleracea (Spinach).